A 213-amino-acid chain; its full sequence is Large ribosomal subunit protein uL1 (213 aa).

The protein belongs to the universal ribosomal protein uL1 family. Part of the 50S ribosomal subunit.

In terms of biological role, probably involved in E site tRNA release. Binds directly to 23S rRNA. Protein L1 is also a translational repressor protein, it controls the translation of the L1 operon by binding to its mRNA. Thus it also controls transcription of L10 and L12 by translational coupling. Unlike the case in E.coli, where the site is in the untranslated mRNA leader, this site is within the L1 protein's structural gene. This is Large ribosomal subunit protein uL1 from Methanococcus vannielii (strain ATCC 35089 / DSM 1224 / JCM 13029 / OCM 148 / SB).